Reading from the N-terminus, the 843-residue chain is Aminopeptidase N (843 aa).

Residues Glu-120 and 252–256 each bind substrate; that span reads GAMEN. Residue His-288 coordinates Zn(2+). The active-site Proton acceptor is Glu-289. Zn(2+) is bound by residues His-292 and Glu-311.

Belongs to the peptidase M1 family. As to quaternary structure, monomer. Zn(2+) is required as a cofactor.

The protein localises to the cytoplasm. It catalyses the reaction Release of an N-terminal amino acid, Xaa-|-Yaa- from a peptide, amide or arylamide. Xaa is preferably Ala, but may be most amino acids including Pro (slow action). When a terminal hydrophobic residue is followed by a prolyl residue, the two may be released as an intact Xaa-Pro dipeptide.. In terms of biological role, aminopeptidase with broad substrate specificity to several peptides. In Lactobacillus delbrueckii subsp. lactis, this protein is Aminopeptidase N (pepN).